Reading from the N-terminus, the 102-residue chain is Small ribosomal subunit protein uS10 (102 aa).

It belongs to the universal ribosomal protein uS10 family. Part of the 30S ribosomal subunit.

Involved in the binding of tRNA to the ribosomes. The chain is Small ribosomal subunit protein uS10 from Shouchella clausii (strain KSM-K16) (Alkalihalobacillus clausii).